A 290-amino-acid chain; its full sequence is Protease HtpX (290 aa).

2 helical membrane-spanning segments follow: residues 4-24 (IFLFLATNLAVLVIASITLKL) and 36-56 (GSLLVFCAVFGFAGSLISLFI). Histidine 142 is a Zn(2+) binding site. Residue glutamate 143 is part of the active site. Residue histidine 146 participates in Zn(2+) binding. 2 consecutive transmembrane segments (helical) span residues 150–170 (GDMVTLALIQGVVNTFVMFFA) and 193–213 (FVATIFAELVLGILASIIVMW). Glutamate 219 is a binding site for Zn(2+).

This sequence belongs to the peptidase M48B family. Zn(2+) serves as cofactor.

It is found in the cell inner membrane. The protein is Protease HtpX of Stutzerimonas stutzeri (strain A1501) (Pseudomonas stutzeri).